The following is a 154-amino-acid chain: S-protein homolog 12 (154 aa).

Residues 1–30 (MGTNKIPKTLNGNLVLILIITIMMVTHSHG) form the signal peptide.

This sequence belongs to the plant self-incompatibility (S1) protein family.

It is found in the secreted. The protein is S-protein homolog 12 of Arabidopsis thaliana (Mouse-ear cress).